Here is a 515-residue protein sequence, read N- to C-terminus: MDTKYKDDLFRKYVQFHEGKVDTTPGNQQPGSDEYLRVAAATLLSLHKVDPLYRFRLIQFYEVVESSLRSLSSSSLSALHCAFSMLETMAINLFLFPWKKEFRSIKTYTGPFVYYVKSTLLEKDIRAILRFMGYEPELGTVYKLKELVESLQVKMVSFELFLAKVECEQMLGIHSQVKDKGYSELDVVAERKGSTEDARGCSDALRRRAESREHLTTSMARVALQKSASERAAKDYYKPRVTKPSRSVDAYDSYWESRKPPSKASLSLRKEPLAMDVGEDLKDEIIRPSPSLLAMSSSPHGSPDDLSSISSINGLGLLRSTYFSTQDDVDLYTDSEPRATYRRQDALRPDVWLVKNDTHPIYHKRSPPTKESALSKCQNCGLSCSSSLCQRCDSVLVCPSASKPSAFPSKASVHDSLAHGAPMREKYVGHQTQGLDRLAPVHSKPKPSTTATSRCGFCNRAGATNTCTQCSKVSCDACLGAYHYDPCCRKSELHKFLPNSQLNYKSAPFSQLVYR.

Positions 78-150 (ALHCAFSMLE…VYKLKELVES (73 aa)) constitute a PUB domain. The PIM motif signature appears at 321–338 (TYFSTQDDVDLYTDSEPR). The segment at 429 to 452 (GHQTQGLDRLAPVHSKPKPSTTAT) is disordered.

It belongs to the SPATA2 family. In terms of assembly, interacts (via the PIM motif) with RNF31/HOIP (via the PUB domain); the interaction is direct. Interacts (via the PUB domain) with CYLD; the interaction is direct. In terms of tissue distribution, widely expressed, with highest expression in testis, lung and intestine, and lower expression in brain, heart and spleen. Present at high level in Sertoli cells: expressed from stage I to stage XII of the testis seminiferous epithelium (at protein level).

The protein resides in the cytoplasm. Its subcellular location is the nucleus. Its function is as follows. Bridging factor that mediates the recruitment of CYLD to the LUBAC complex, thereby regulating TNF-alpha-induced necroptosis. Acts as a direct binding intermediate that bridges RNF31/HOIP, the catalytic subunit of the LUBAC complex, and the deubiquitinase (CYLD), thereby recruiting CYLD to the TNF-R1 signaling complex (TNF-RSC). Required to activate the 'Met-1'- (linear) and 'Lys-63'-linked deubiquitinase activities of CYLD. Controls the kinase activity of RIPK1 and TNF-alpha-induced necroptosis by promoting 'Met-1'-linked deubiquitination of RIPK1 by CYLD. The polypeptide is Spermatogenesis-associated protein 2 (Mus musculus (Mouse)).